The sequence spans 60 residues: Light-harvesting polypeptide B-885 alpha-2 chain (60 aa).

At 1 to 16 (SAPAQWKLWLVMDPRT) the chain is on the cytoplasmic side. A helical membrane pass occupies residues 17–37 (VMIGTAAWLGVLALLIHFLLL). Histidine 33 provides a ligand contact to a bacteriochlorophyll. Over 38-60 (GTERFNWIDTGLKEQKATAAAQA) the chain is Periplasmic.

It belongs to the antenna complex alpha subunit family. As to quaternary structure, the core complex is formed by different alpha and beta chains, binding bacteriochlorophyll molecules, and arranged most probably in tetrameric structures disposed around the reaction center. The non-pigmented gamma chains may constitute additional components.

The protein resides in the cell inner membrane. Antenna complexes are light-harvesting systems, which transfer the excitation energy to the reaction centers. The polypeptide is Light-harvesting polypeptide B-885 alpha-2 chain (Rhodocyclus tenuis (Rhodospirillum tenue)).